We begin with the raw amino-acid sequence, 509 residues long: Photosystem II CP47 reaction center protein (509 aa).

Transmembrane regions (helical) follow at residues 21–36 (SVHLMHTALVAGWAGS), 101–115 (IVLSGLLFLAAVWHW), 140–156 (GIHLFLSGLLCFGFGAF), 203–218 (IAAGIVGIIAGLFHLT), 237–252 (VLSSSIAAVFFAAFVV), and 457–472 (VFALLFFFGHLWHGAR).

Belongs to the PsbB/PsbC family. PsbB subfamily. As to quaternary structure, PSII is composed of 1 copy each of membrane proteins PsbA, PsbB, PsbC, PsbD, PsbE, PsbF, PsbH, PsbI, PsbJ, PsbK, PsbL, PsbM, PsbT, PsbX, PsbY, PsbZ, Psb30/Ycf12, peripheral proteins PsbO, CyanoQ (PsbQ), PsbU, PsbV and a large number of cofactors. It forms dimeric complexes. Binds multiple chlorophylls. PSII binds additional chlorophylls, carotenoids and specific lipids. is required as a cofactor.

It localises to the cellular thylakoid membrane. Functionally, one of the components of the core complex of photosystem II (PSII). It binds chlorophyll and helps catalyze the primary light-induced photochemical processes of PSII. PSII is a light-driven water:plastoquinone oxidoreductase, using light energy to abstract electrons from H(2)O, generating O(2) and a proton gradient subsequently used for ATP formation. This is Photosystem II CP47 reaction center protein from Nostoc sp. (strain PCC 7120 / SAG 25.82 / UTEX 2576).